A 399-amino-acid chain; its full sequence is Tryptophan synthase beta chain (399 aa).

Lys92 carries the post-translational modification N6-(pyridoxal phosphate)lysine.

It belongs to the TrpB family. As to quaternary structure, tetramer of two alpha and two beta chains. Requires pyridoxal 5'-phosphate as cofactor.

It carries out the reaction (1S,2R)-1-C-(indol-3-yl)glycerol 3-phosphate + L-serine = D-glyceraldehyde 3-phosphate + L-tryptophan + H2O. The protein operates within amino-acid biosynthesis; L-tryptophan biosynthesis; L-tryptophan from chorismate: step 5/5. Functionally, the beta subunit is responsible for the synthesis of L-tryptophan from indole and L-serine. In Thiobacillus denitrificans (strain ATCC 25259 / T1), this protein is Tryptophan synthase beta chain.